The primary structure comprises 50 residues: METTNFGFVASLLFVGIPTIFLIGLFISTQDGEKSSFYSDSSKGKLGPKR.

The helical transmembrane segment at 7–27 (GFVASLLFVGIPTIFLIGLFI) threads the bilayer.

The protein belongs to the PsbM family. As to quaternary structure, PSII is composed of 1 copy each of membrane proteins PsbA, PsbB, PsbC, PsbD, PsbE, PsbF, PsbH, PsbI, PsbJ, PsbK, PsbL, PsbM, PsbT, PsbX, PsbY, Psb30/Ycf12, peripheral proteins PsbO, CyanoQ (PsbQ), PsbU, PsbV and a large number of cofactors. It forms dimeric complexes.

It localises to the cellular thylakoid membrane. Its function is as follows. One of the components of the core complex of photosystem II (PSII). PSII is a light-driven water:plastoquinone oxidoreductase that uses light energy to abstract electrons from H(2)O, generating O(2) and a proton gradient subsequently used for ATP formation. It consists of a core antenna complex that captures photons, and an electron transfer chain that converts photonic excitation into a charge separation. This subunit is found at the monomer-monomer interface. The sequence is that of Photosystem II reaction center protein M from Prochlorococcus marinus subsp. pastoris (strain CCMP1986 / NIES-2087 / MED4).